The following is a 455-amino-acid chain: 1,4-beta-D-glucan cellobiohydrolase C (455 aa).

The N-terminal stretch at 1–19 (MHYSASGLALAFLLPAIQA) is a signal peptide. A CBM1 domain is found at 20 to 55 (QQTLYGQCGGSGWTGATSCVAGAACSTLNQWYAQCL). Intrachain disulfides connect C27–C44 and C38–C54. A thr-rich linker region spans residues 59-92 (TTTSTTLTTTTSSVTTTSNPGSTTTTSSVTVTAT). The disordered stretch occupies residues 66 to 86 (TTTTSSVTTTSNPGSTTTTSS). Positions 93–450 (ASGNPFSGYQ…QAYFVQLLQN (358 aa)) are catalytic. D185 is a catalytic residue. 2 disulfides stabilise this stretch: C186–C245 and C377–C424. D231 functions as the Proton donor in the catalytic mechanism. Residue D410 is the Nucleophile of the active site.

It belongs to the glycosyl hydrolase 6 (cellulase B) family.

The protein localises to the secreted. It carries out the reaction Hydrolysis of (1-&gt;4)-beta-D-glucosidic linkages in cellulose and cellotetraose, releasing cellobiose from the non-reducing ends of the chains.. In terms of biological role, the biological conversion of cellulose to glucose generally requires three types of hydrolytic enzymes: (1) Endoglucanases which cut internal beta-1,4-glucosidic bonds; (2) Exocellobiohydrolases that cut the disaccharide cellobiose from the non-reducing end of the cellulose polymer chain; (3) Beta-1,4-glucosidases which hydrolyze the cellobiose and other short cello-oligosaccharides to glucose. Active against carboxymethylcellulose, beta-glucan and lichenan. The chain is 1,4-beta-D-glucan cellobiohydrolase C (cbhC) from Emericella nidulans (strain FGSC A4 / ATCC 38163 / CBS 112.46 / NRRL 194 / M139) (Aspergillus nidulans).